Reading from the N-terminus, the 673-residue chain is Putative potassium transport system protein Kup 1 (673 aa).

13 consecutive transmembrane segments (helical) span residues 14–34 (GAGF…SPLY), 58–78 (LSLI…WIAL), 101–121 (WLII…ALTP), 147–167 (LPIV…QRFG), 175–195 (FGPV…INLF), 196–216 (GDFS…LLSP), 220–240 (AGIF…ALYS), 252–272 (VSWP…AAWL), 294–314 (LIIF…QALI), 345–365 (LYIP…VVYF), 374–394 (AYGL…TVYL), 403–423 (VFVV…FAAS), and 427–447 (FLHG…VMAI).

The protein belongs to the HAK/KUP transporter (TC 2.A.72) family.

The protein localises to the cell membrane. It carries out the reaction K(+)(in) + H(+)(in) = K(+)(out) + H(+)(out). In terms of biological role, transport of potassium into the cell. Likely operates as a K(+):H(+) symporter. The polypeptide is Putative potassium transport system protein Kup 1 (Lactococcus lactis subsp. cremoris (strain MG1363)).